The primary structure comprises 308 residues: HTH-type transcriptional regulator YtlI (308 aa).

The HTH lysR-type domain maps to 1–57 (MELRSIKTFHTIVKFGSFYKAAEILNYSQPTISMRMKQLEQDLGVLLFERGKSLQLT). Residues 18-37 (FYKAAEILNYSQPTISMRMK) constitute a DNA-binding region (H-T-H motif).

It belongs to the LysR transcriptional regulatory family.

Positively regulates the expression of ytmI operon in response to the availability of sulfur sources. The polypeptide is HTH-type transcriptional regulator YtlI (ytlI) (Bacillus subtilis (strain 168)).